The following is a 320-amino-acid chain: Probable NAD(P)H-dependent D-xylose reductase xyl1 (320 aa).

Residue tyrosine 50 is the Proton donor of the active site. Substrate is bound at residue histidine 112. NAD(+) is bound by residues 167–168 (SN), 216–225 (SSFGPLSFLE), and 272–282 (KSNNPTRLSQN).

Belongs to the aldo/keto reductase family.

It carries out the reaction xylitol + NAD(+) = D-xylose + NADH + H(+). It catalyses the reaction xylitol + NADP(+) = D-xylose + NADPH + H(+). It participates in carbohydrate metabolism; D-xylose degradation. Catalyzes the initial reaction in the xylose utilization pathway by reducing D-xylose into xylitol. Xylose is a major component of hemicelluloses such as xylan. Most fungi utilize D-xylose via three enzymatic reactions, xylose reductase (XR), xylitol dehydrogenase (XDH), and xylulokinase, to form xylulose 5-phosphate, which enters pentose phosphate pathway. The polypeptide is Probable NAD(P)H-dependent D-xylose reductase xyl1 (xyl1) (Aspergillus terreus (strain NIH 2624 / FGSC A1156)).